The sequence spans 210 residues: Orotate phosphoribosyltransferase (210 aa).

Residues Arg-94, Lys-98, His-100, and 120–128 (EDLISTGGS) contribute to the 5-phospho-alpha-D-ribose 1-diphosphate site. Position 124 (Ser-124) interacts with orotate.

Belongs to the purine/pyrimidine phosphoribosyltransferase family. PyrE subfamily. As to quaternary structure, homodimer. Requires Mg(2+) as cofactor.

It carries out the reaction orotidine 5'-phosphate + diphosphate = orotate + 5-phospho-alpha-D-ribose 1-diphosphate. Its pathway is pyrimidine metabolism; UMP biosynthesis via de novo pathway; UMP from orotate: step 1/2. Functionally, catalyzes the transfer of a ribosyl phosphate group from 5-phosphoribose 1-diphosphate to orotate, leading to the formation of orotidine monophosphate (OMP). This chain is Orotate phosphoribosyltransferase, found in Bacillus anthracis (strain A0248).